The chain runs to 522 residues: Cyclic GMP-AMP synthase (522 aa).

The tract at residues 1-144 (MQPWHGKAMQ…PPGPWDVPSP (144 aa)) is disordered. DNA-binding regions lie at residues 1–160 (MQPW…DAAP) and 173–215 (KLSR…GSYY). Residue Lys7 is modified to N6-acetyllysine. Residue Ser13 is modified to Phosphoserine. The residue at position 21 (Lys21) is an N6-acetyllysine. Ser37 is subject to Phosphoserine. 5 positions are modified to N6-acetyllysine: Lys47, Lys50, Lys56, Lys62, and Lys63. A Phosphoserine modification is found at Ser64. Residues 64-73 (SAPDTQERPP) show a composition bias toward basic and acidic residues. A required for association with the cell membrane region spans residues 64 to 75 (SAPDTQERPPVR). Phosphothreonine is present on Thr68. Lys82 and Lys83 each carry N6-acetyllysine. The span at 88-97 (AQDTQPSDAT) shows a compositional bias: polar residues. Thr91 carries the phosphothreonine modification. Phosphoserine occurs at positions 98, 116, and 129. A compositionally biased stretch (low complexity) spans 98-118 (SAPGAEGLEPPAAREPALSRA). Residues 120–160 (SCRQRGARCSTKPRPPPGPWDVPSPGLPVSAPILVRRDAAP) are required for activation upon DNA viral infection. Lys131 is subject to N6-lactoyllysine. Over residues 132 to 144 (PRPPPGPWDVPSP) the composition is skewed to pro residues. Position 143 is a phosphoserine (Ser143). The Nuclear export signal signature appears at 169–174 (LEKLKL). Lys173 participates in a covalent cross-link: Glycyl lysine isopeptide (Lys-Gly) (interchain with G-Cter in ubiquitin). The residue at position 191 (Asp191) is a PolyADP-ribosyl aspartic acid. Residue Asn210 is modified to (Microbial infection) Deamidated asparagine; by herpes simplex virus 1/HHV-1 UL37. Thr211 serves as a coordination point for GTP. Phosphoserine is present on Ser213. Residue Ser213 participates in ATP binding. Tyr215 carries the phosphotyrosine; by BLK modification. The Mg(2+) site is built by Glu225 and Asp227. An ATP-binding site is contributed by 225–227 (EFD). Asp227 is a binding site for 2',3'-cGAMP. Residue Lys231 forms a Glycyl lysine isopeptide (Lys-Gly) (interchain with G-Cter in SUMO) linkage. Lys285 is covalently cross-linked (Glycyl lysine isopeptide (Lys-Gly) (interchain with G-Cter in ubiquitin)). 5-glutamyl polyglutamate is present on Glu286. A Nuclear localization signal motif is present at residues 295-305 (DVIMKRKRGGS). The KRKR-loop signature appears at 299 to 302 (KRKR). Ser305 is subject to Phosphoserine; by CDK1 and PKB. Glu314 carries the 5-glutamyl glutamate modification. Asp319 is a binding site for GTP. Asp319 lines the Mg(2+) pocket. Asp319 is a 2',3'-cGAMP binding site. The tract at residues 341–382 (QNWLSAKVRKQLRLKPFYLVPKHAKEGNGFQEETWRLSFSHI) is interaction with collided ribosomes. Lys347 participates in a covalent cross-link: Glycyl lysine isopeptide (Lys-Gly) (interchain with G-Cter in SUMO); alternate. Lys347 participates in a covalent cross-link: Glycyl lysine isopeptide (Lys-Gly) (interchain with G-Cter in ubiquitin); alternate. The 2',3'-cGAMP site is built by Lys362 and Arg376. Residue 376 to 383 (RLSFSHIE) coordinates GTP. 380–383 (SHIE) lines the ATP pocket. Lys384 carries the N6-acetyllysine modification. Lys384 is covalently cross-linked (Glycyl lysine isopeptide (Lys-Gly) (interchain with G-Cter in SUMO); alternate). Lys384 is covalently cross-linked (Glycyl lysine isopeptide (Lys-Gly) (interchain with G-Cter in ubiquitin); alternate). The DNA-binding stretch occupies residues 384–407 (KEILNNHGKSKTCCENKEEKCCRK). Asn389 carries the post-translational modification (Microbial infection) Deamidated asparagine; by herpes simplex virus 1/HHV-1 UL37. Residue His390 participates in Zn(2+) binding. Residues Lys392 and Lys394 each carry the N6-acetyllysine modification. Residue Lys394 forms a Glycyl lysine isopeptide (Lys-Gly) (interchain with G-Cter in SUMO) linkage. The Zn(2+) site is built by Cys396, Cys397, and Cys404. S-palmitoyl cysteine attachment occurs at residues Cys404 and Cys405. Residues Lys411, Lys414, Lys427, and Lys428 each participate in a glycyl lysine isopeptide (Lys-Gly) (interchain with G-Cter in ubiquitin) cross-link. Lys414 carries the post-translational modification N6-acetyllysine. Residue Lys414 coordinates ATP. The KKH-loop signature appears at 427-429 (KKH). Residues Ser434 and Ser435 each carry the phosphoserine modification. ATP is bound at residue 435–439 (SYHVK). Gln451 and Gln454 each carry (Microbial infection) Deamidated glutamine; by herpes simplex virus 1/HHV-1 UL37. Residue Cys474 is the site of S-palmitoyl cysteine attachment. Residue Lys479 forms a Glycyl lysine isopeptide (Lys-Gly) (interchain with G-Cter in SUMO); alternate linkage. Residue Lys479 forms a Glycyl lysine isopeptide (Lys-Gly) (interchain with G-Cter in ubiquitin); alternate linkage. Lys506 carries the N6-methyllysine modification.

It belongs to the mab-21 family. As to quaternary structure, monomer in the absence of DNA. Homodimer in presence of dsDNA: forms a 2:2 dimer with two enzymes binding to two DNA molecules. Interacts with nucleosomes; interaction is mainly mediated via histones H2A and H2B and inactivates the nucleotidyltransferase activity by blocking DNA-binding and subsequent activation. Interacts with PQBP1 (via WW domain). Interacts with TRIM14; this interaction recruits USP14, leading to deubiquitinate and stabilize CGAS and promote type I interferon production. Interacts with ZCCHC3; promoting sensing of dsDNA by CGAS. Interacts (when not monomethylated) with (poly-ADP-ribosylated) PARP1; interaction takes place in the nucleus and prevents the formation of the PARP1-TIMELESS complex. Interacts (when monomethylated) with SGF29; interaction with SGF29 prevents interaction with PARP1. Interacts with PCBP2; preventing the formation of liquid-like droplets in which CGAS is activated. Interacts with IRGM; promoting CGAS degradation. Interacts with DDX41. (Microbial infection) Interacts with herpes virus 8/HHV-8 protein ORF52; this interaction inhibits cGAS enzymatic activity by preventing the formation of liquid-like droplets by CGAS. In terms of assembly, (Microbial infection) Interacts with herpes simplex virus 1 protein UL37; this interaction deaminates CGAS and inhibits its activation. As to quaternary structure, (Microbial infection) Interacts with vaccinia virus protein OPG067; this interaction promotes CGAS proteasomal degradation. (Microbial infection) Interacts with cytomegalovirus protein UL31; this interaction promotes dissociation of DNA from CGAS, thereby inhibiting the enzymatic activity of CGAS. In terms of assembly, (Microbial infection) Interacts with herpes simplex virus 1 tegument protein VP22 (UL49); this interaction inhibits cGAS enzymatic activity by preventing the formation of liquid-like droplets by CGAS. As to quaternary structure, (Microbial infection) Interacts with herpesvirus 3 tegument protein VP22 (ORF9); this interaction inhibits cGAS enzymatic activity by preventing the formation of liquid-like droplets by CGAS. (Microbial infection) Interacts with human cytomegalovirus proteins UL42 and UL83; these interactions result in the inhibition of cGAS-STING signaling. The cofactor is Mg(2+). It depends on Mn(2+) as a cofactor. Zn(2+) serves as cofactor. In terms of processing, the N-terminal disordered part (1-160) is phosphorylated by AURKB during the G2-M transition, blocking CGAS liquid phase separation and preventing activation. Phosphorylation at Tyr-215 by BLK promotes cytosolic retention. Localizes into the nucleus following dephosphorylation at Tyr-215. Phosphorylation at Ser-435 activates the nucleotidyltransferase activity. Dephosphorylation at Ser-435 by PPP6C impairs its ability to bind GTP, thereby inactivating it. Phosphorylation at Thr-68 and Ser-213 by PRKDC inhibits its cyclic GMP-AMP synthase activity by impairing homodimerization and activation. Phosphorylation at Ser-305 by AKT (AKT1, AKT2 or AKT3) suppresses the nucleotidyltransferase activity. Phosphorylation at Ser-305 by CDK1 during mitosis leads to its inhibition, thereby preventing CGAS activation by self-DNA during mitosis. Dephosphorylated at Ser-305 by protein phosphatase PP1 upon mitotic exit. Ubiquitinated at Lys-414 via 'Lys-48'-linked polyubiquitin chains, leading to its SQSTM1-mediated autophagic degradation. Interaction with TRIM14 promotes recruitment of USP14, leading to deubiquitinate Lys-414 and stabilize CGAS. Ubiquitinated at Lys-173 and Lys-384 by RNF185 via 'Lys-27'-linked polyubiquitination, promoting CGAS cyclic GMP-AMP synthase activity. Monoubiquitination at Lys-347 by TRIM56 promotes oligomerization and subsequent activation. Monoubiquitination by TRIM41 promotes CGAS activation. Ubiquitination at Lys-285 and Lys-479 via 'Lys-48'-linked polyubiquitination promotes its degradation. Deubiquitination at Lys-285 by USP29 promotes its stabilization. Deubiquitinated by USP27X, promoting its stabilization. Ubiquitinated at Lys-411 via 'Lys-63'-linked polyubiquitin chains by MARCHF8, leading to the inhibition of its DNA binding ability. In cycling cells, nucleosome-bound CGAS is ubiquitinated at Lys-427 and Lys-428 via 'Lys-48'-linked polyubiquitin chains by the ECS(SPSB3) complex, leading to its degradation: ubiquitination and degradation of nuclear CGAS during G1 and G2 phases is required to promote low intranuclear CGAS abundance before the next mitotic cycle. Post-translationally, sumoylated at Lys-231 and Lys-479 by TRIM38 in uninfected cells and during the early phase of viral infection, promoting its stability by preventing ubiquitination at Lys-285 and Lys-479, and subsequent degradation. Desumoylated by SENP2 during the late phase of viral infection. Sumoylation at Lys-347, Lys-384 and Lys-394 prevents DNA-binding, oligomerization and nucleotidyltransferase activity. Desumoylation at Lys-347, Lys-384 and Lys-394 by SENP7 relieves inhibition and activates CGAS. In terms of processing, polyglutamylated by TTLL6 at Glu-286, leading to impair DNA-binding activity. Monoglutamylated at Glu-314 by TTLL4, leading to impair the nucleotidyltransferase activity. Deglutamylated by AGBL5/CCP5 and AGBL6/CCP6. Acetylation at Lys-384, Lys-394 and Lys-414 inhibits the cyclic GMP-AMP synthase activity. Deacetylated upon cytosolic DNA challenge such as viral infections. Acetylation can be mediated by aspirin (acetylsalicylate) drug, which directly acetylates CGAS. Acetylation by aspirin efficiently inhibits CGAS-mediated immune responses and is able to suppress self-DNA-induced autoimmunity. Acetylation at Lys-47, Lys-56, Lys-62 and Lys-83 by KAT5 increases the cyclic GMP-AMP synthase activity by promoting DNA-binding and subsequent activation. Post-translationally, proteolytically cleaved by apoptotic caspases during apoptosis, leading to its inactivation. The damage of the nucleus and the mitochondria during apoptosis leads to leakage of nuclear and mitochondrial DNA, which activate CGAS: cleavage and inactivation during apoptosis in required to prevent cytokine overproduction. Cleaved by CASP3 at Asp-319 during virus-induced apoptosis, thereby inactivating it and preventing cytokine overproduction. Cleaved by CASP1 at Asp-140 and Asp-157 upon DNA virus infection; the cleavage impairs cGAMP production. Also cleaved by the pyroptotic CASP4 and CASP5 during non-canonical inflammasome activation; they don't cut at the same sites than CASP1. In terms of processing, degraded via selective autophagy following interaction with IRGM. IRGM promotes CGAS recruitment to autophagosome membranes, promoting its SQSTM1/p62-dependent autophagic degradation. Poly-ADP-ribosylation at Asp-191 by PARP1 impairs DNA-binding, thereby preventing the cyclic GMP-AMP synthase activity. Post-translationally, palmitoylation at Cys-474 by ZDHHC18 impairs DNA-binding, thereby preventing the cyclic GMP-AMP synthase activity. Palmitoylation at Cys-404 and Cys-405 by ZDHHC9 promotes homodimerization and cyclic GMP-AMP synthase activity. Depalmitoylation at Cys-404 and Cys-405 by LYPLAL1 impairs homodimerization and cyclic GMP-AMP synthase activity. In terms of processing, monomethylated at Lys-506 by SETD7. Monomethylation promotes interaction with SGF29, preventing interaction between PARP1 nad SGF29. Demethylation by RIOX1 promotes interaction with PARP1, followed by PARP1 inactivation. Lactylation by AARS2 prevents ability to undergo liquid-liquid phase separation (LLPS), thereby inhibiting CGAS activation. Post-translationally, (Microbial infection) Deamidated on 'Asn-210' by herpes simplex virus 1 protein UL37. This modification significantly reduces CGAS-dependent cGAMP production and innate immune signaling induced by dsDNA. In terms of processing, (Microbial infection) Degraded by an autophagy-mediated mechanism in presence of Chikungunya virus capsid protein. As to expression, expressed in the monocytic cell line THP1.

The protein localises to the nucleus. Its subcellular location is the chromosome. It localises to the cell membrane. It is found in the cytoplasm. The protein resides in the cytosol. It carries out the reaction GTP + ATP = 2',3'-cGAMP + 2 diphosphate. The catalysed reaction is GTP + ATP = pppGp(2'-5')A + diphosphate. The enzyme catalyses pppGp(2'-5')A = 2',3'-cGAMP + diphosphate. Its activity is regulated as follows. The enzyme activity is strongly increased by double-stranded DNA (dsDNA), but not by single-stranded DNA or RNA. DNA-binding induces the formation of liquid-like droplets in which CGAS is activated. Liquid-like droplets also create a selective environment that restricts entry of negative regulators, such as TREX1 or BANF1/BAF, allowing sensing of DNA. A number of mechanisms exist to restrict its activity toward self-DNA. The nucleotidyltransferase activity is inhibited in the nucleus via its association with nucleosomes: interacts with the acidic patch of histones H2A and H2B, thereby blocking DNA-binding and subsequent activation. CGAS is also inactive when associated with mitotic chromatin. Chromatin-bound CGAS cannot be activated by exogenous DNA in mitotic cells: phosphorylation of the N-terminal disordered part by AURKB during the G2-M transition blocks CGAS liquid phase separation and activation. Activity toward self-DNA is inhibited by BANF1/BAF upon acute loss of nuclear membrane integrity: BANF1/BAF acts by outcompeting CGAS for DNA-binding, thereby preventing CGAS activation. DNA-induced activation at micronuclei is also limited by TREX1, which degrades micronuclear DNA upon nuclear envelope rupture, thereby preventing CGAS activation. CGAS can be released from nucleosomes and activated by MRE11 component of the MRN complex, which displaces CGAS from acidic-patch-mediated sequestration. Acetylation at Lys-384, Lys-394 and Lys-414 inhibits the cyclic GMP-AMP synthase activity. Inhibited by aspirin (acetylsalicylate) drug, which acetylates CGAS. Acetylation by KAT5 increases the cyclic GMP-AMP synthase activity by promoting DNA-binding and subsequent activation. Phosphorylation at Ser-305 suppresses the nucleotidyltransferase activity. Phosphorylation at Ser-435 promotes the cyclic GMP-AMP synthase activity. Phosphorylation at Thr-68 and Ser-213 inhibits its cyclic GMP-AMP synthase activity. Ubiquitination at Lys-173 and Lys-384 via 'Lys-27'-linked polyubiquitination enhances the cyclic GMP-AMP synthase activity. Monoubiquitination at Lys-347 promotes oligomerization and subsequent activation. Sumoylation at Lys-347, Lys-384 and Lys-394 prevents DNA-binding, oligomerization and nucleotidyltransferase activity. The enzyme activity is impaired by the cleavage at Asp-140 and Asp-157 produced by CASP1. In addition to DNA, also activated by collided ribosomes upon translation stress: specifically binds collided ribosomes, promoting its activation and triggering type-I interferon production. Strongly inhibited by compound PF-06928215, which is specific for human protein. Inhibited by small-molecule inhibitors with a pyridoindole tricyclic core G108, G140 and G150. (Microbial infection) Nucleotidyltransferase activity is inhibited by different herpesvirus tegument proteins (Herpes simplex virus 1 tegument protein VP22, herpes virus 8 protein ORF52 and herpesvirus 3 tegument protein VP22/ORF9). Viral tegument proteins act by disrupting liquid-like droplets in which CGAS is activated, thereby preventing CGAS activity. In terms of biological role, nucleotidyltransferase that catalyzes the formation of cyclic GMP-AMP (2',3'-cGAMP) from ATP and GTP and plays a key role in innate immunity. Catalysis involves both the formation of a 2',5' phosphodiester linkage at the GpA step and the formation of a 3',5' phosphodiester linkage at the ApG step, producing c[G(2',5')pA(3',5')p]. Acts as a key DNA sensor: directly binds double-stranded DNA (dsDNA), inducing the formation of liquid-like droplets in which CGAS is activated, leading to synthesis of 2',3'-cGAMP, a second messenger that binds to and activates STING1, thereby triggering type-I interferon production. Preferentially recognizes and binds curved long dsDNAs of a minimal length of 40 bp. Acts as a key foreign DNA sensor, the presence of double-stranded DNA (dsDNA) in the cytoplasm being a danger signal that triggers the immune responses. Has antiviral activity by sensing the presence of dsDNA from DNA viruses in the cytoplasm. Also acts as an innate immune sensor of infection by retroviruses, such as HIV-2, by detecting the presence of reverse-transcribed DNA in the cytosol. In contrast, HIV-1 is poorly sensed by CGAS, due to its capsid that cloaks viral DNA from CGAS detection. Detection of retroviral reverse-transcribed DNA in the cytosol may be indirect and be mediated via interaction with PQBP1, which directly binds reverse-transcribed retroviral DNA. Also detects the presence of DNA from bacteria, such as M.tuberculosis. 2',3'-cGAMP can be transferred from producing cells to neighboring cells through gap junctions, leading to promote STING1 activation and convey immune response to connecting cells. 2',3'-cGAMP can also be transferred between cells by virtue of packaging within viral particles contributing to IFN-induction in newly infected cells in a cGAS-independent but STING1-dependent manner. Also senses the presence of neutrophil extracellular traps (NETs) that are translocated to the cytosol following phagocytosis, leading to synthesis of 2',3'-cGAMP. In addition to foreign DNA, can also be activated by endogenous nuclear or mitochondrial DNA. When self-DNA leaks into the cytosol during cellular stress (such as mitochondrial stress, SARS-CoV-2 infection causing severe COVID-19 disease, DNA damage, mitotic arrest or senescence), or is present in form of cytosolic micronuclei, CGAS is activated leading to a state of sterile inflammation. Acts as a regulator of cellular senescence by binding to cytosolic chromatin fragments that are present in senescent cells, leading to trigger type-I interferon production via STING1 and promote cellular senescence. Also involved in the inflammatory response to genome instability and double-stranded DNA breaks: acts by localizing to micronuclei arising from genome instability. Micronuclei, which are frequently found in cancer cells, consist of chromatin surrounded by their own nuclear membrane: following breakdown of the micronuclear envelope, a process associated with chromothripsis, CGAS binds self-DNA exposed to the cytosol, leading to 2',3'-cGAMP synthesis and subsequent activation of STING1 and type-I interferon production. Activated in response to prolonged mitotic arrest, promoting mitotic cell death. In a healthy cell, CGAS is however kept inactive even in cellular events that directly expose it to self-DNA, such as mitosis, when cGAS associates with chromatin directly after nuclear envelope breakdown or remains in the form of postmitotic persistent nuclear cGAS pools bound to chromatin. Nuclear CGAS is inactivated by chromatin via direct interaction with nucleosomes, which block CGAS from DNA binding and thus prevent CGAS-induced autoimmunity. Also acts as a suppressor of DNA repair in response to DNA damage: inhibits homologous recombination repair by interacting with PARP1, the CGAS-PARP1 interaction leading to impede the formation of the PARP1-TIMELESS complex. In addition to DNA, also sense translation stress: in response to translation stress, translocates to the cytosol and associates with collided ribosomes, promoting its activation and triggering type-I interferon production. In contrast to other mammals, human CGAS displays species-specific mechanisms of DNA recognition and produces less 2',3'-cGAMP, allowing a more fine-tuned response to pathogens. This chain is Cyclic GMP-AMP synthase, found in Homo sapiens (Human).